Reading from the N-terminus, the 277-residue chain is Small ribosomal subunit protein uS2 (277 aa).

The segment at 254-277 is disordered; that stretch reads LAGAGSSALNDSGADLSEANPTEA.

Belongs to the universal ribosomal protein uS2 family.

This is Small ribosomal subunit protein uS2 (rpsB) from Mycobacterium leprae (strain TN).